Consider the following 722-residue polypeptide: Polyribonucleotide nucleotidyltransferase (722 aa).

Residues D487 and D493 each coordinate Mg(2+). The region spanning 554 to 613 (PRIETFKIPTDKIREVIGTGGKVIREIVEKTGAKVNIEDDGTVKVASSDGESIKAAIKWI) is the KH domain. The S1 motif domain maps to 623–691 (GEIYEGTVVK…DRGKTRLSMK (69 aa)). Residues 691 to 722 (KVVDQDTGEDLEAKQKAEAKAEDEAPAQAAGE) are disordered. The span at 701 to 713 (LEAKQKAEAKAED) shows a compositional bias: basic and acidic residues.

The protein belongs to the polyribonucleotide nucleotidyltransferase family. Mg(2+) is required as a cofactor.

The protein localises to the cytoplasm. It catalyses the reaction RNA(n+1) + phosphate = RNA(n) + a ribonucleoside 5'-diphosphate. Involved in mRNA degradation. Catalyzes the phosphorolysis of single-stranded polyribonucleotides processively in the 3'- to 5'-direction. This chain is Polyribonucleotide nucleotidyltransferase, found in Rhodopseudomonas palustris (strain BisB5).